The following is a 251-amino-acid chain: uncharacterized protein (251 aa).

10–34 (ITGAGSGIGKKAAVMFAERGAKVAI) lines the NADP(+) pocket. S139 provides a ligand contact to substrate. Catalysis depends on Y152, which acts as the Proton acceptor.

It belongs to the short-chain dehydrogenases/reductases (SDR) family.

This is an uncharacterized protein from Thermotoga maritima (strain ATCC 43589 / DSM 3109 / JCM 10099 / NBRC 100826 / MSB8).